The chain runs to 448 residues: FAD-dependent monooxygenase srdH (448 aa).

Residues Glu32 and Arg107 each contribute to the FAD site. Gln227 is an active-site residue. An FAD-binding site is contributed by Asp313.

This sequence belongs to the paxM FAD-dependent monooxygenase family. Requires FAD as cofactor.

Highly reducing polyketide synthase; part of the gene cluster that mediates the biosynthesis of sordarial, a salicylic aldehyde structurally related to the phytotoxin pyriculol. The most interesting aspect of this pathway is formation of an aromatic product from the highly reducing polyketide synthase srdA. SrdA synthesizes a reduced polyketide chain from one molecule of acetyl-CoA and five molecules of malonyl-CoA. The polyketide chain is then reductively released as an aldehyde. The oxidoreductases srdC, srdD and srdE then oxidize one of the hydroxy groups to facilitate the intramolecular aldol condensation, followed by dehydration to yield a salicylic aldehyde. This aldehyde can undergo facile reduction by endogenous reductases to yield the alcohol 1-hydroxy-2-hydroxymethyl-3-pent-1,3-dienylbenzene. The flavin-dependent srdI counteract against the propensity of the aldehydes to be reduced under physiological conditions and is responsible for reoxidizing 1-hydroxy-2-hydroxymethyl-3-pent-1,3-dienylbenzene back to the salicylic aldehyde. This salicylic aldehyde is then selectively epoxidized by the cupin-domain-containing oxidoreductase srdB to yield the epoxide, which can be hydrolyzed stereoselectively by the hydrolase srdG to give the final product sordarial. This chain is FAD-dependent monooxygenase srdH, found in Neurospora crassa (strain ATCC 24698 / 74-OR23-1A / CBS 708.71 / DSM 1257 / FGSC 987).